The primary structure comprises 298 residues: uncharacterized protein (298 aa).

10 helical membrane passes run 5–25 (ILFG…MSAF), 36–56 (MENV…IYPF), 76–96 (VVVG…ISLA), 97–117 (TATA…PLLL), 124–144 (SALI…DPSV), 147–167 (VGLV…LAYI), 181–201 (VILA…FIDI), 216–236 (ILWI…LTYA), 244–264 (IIAP…LYLG), and 272–292 (SSLG…PALL). Residues 17 to 141 (LCFGIMSAFV…GLVGVVLISD (125 aa)) enclose the EamA 1 domain. One can recognise an EamA 2 domain in the interval 183–288 (LAFAFGMSLL…ILCSGLLIAL (106 aa)).

Belongs to the EamA transporter family.

It is found in the cell membrane. This is an uncharacterized protein from Helicobacter pylori (strain J99 / ATCC 700824) (Campylobacter pylori J99).